Here is a 370-residue protein sequence, read N- to C-terminus: Developmentally-regulated GTP-binding protein 1 homolog (370 aa).

Residues 65-292 (ARVGLIGFPS…LLDKIWEYLK (228 aa)) enclose the OBG-type G domain. GTP contacts are provided by residues 71–78 (GFPSVGKS), 117–121 (DLPGI), and 250–253 (NKID). The region spanning 292–369 (KLIRVYTKPK…ADEDIVQIVK (78 aa)) is the TGS domain.

The protein belongs to the TRAFAC class OBG-HflX-like GTPase superfamily. OBG GTPase family.

This Dictyostelium discoideum (Social amoeba) protein is Developmentally-regulated GTP-binding protein 1 homolog (drg1).